Here is a 467-residue protein sequence, read N- to C-terminus: tRNA dimethylallyltransferase (467 aa).

A mitochondrion-targeting transit peptide spans 1–47 (MASVAAARAVPVGSGLRGLQRTLPLVVILGATGTGKSTLALQLGQRL). Residue 32 to 37 (TGTGKS) coordinates dimethylallyl diphosphate. 2 interaction with substrate tRNA regions span residues 55-58 (DSMQ) and 183-187 (RKVAR). Residues 221-230 (FSNPCILWLH) form a core aggregation region region. The interaction with isopentenylpyrophosphate transferase stretch occupies residues 233–255 (QAVLDERLDKRVDDMLAAGLLEE). Interaction with substrate tRNA stretches follow at residues 281-283 (QSI) and 313-331 (ALKQ…WVKN). The Matrin-type zinc-finger motif lies at 395-425 (HLCDLCDRIIIGDREWAAHIKSKSHLNQLKK). The interval 429 to 467 (LDSDAVNTIESQSVSPDHNKEPKEKGSPGQNDQELKCSV) is disordered. Over residues 433–444 (AVNTIESQSVSP) the composition is skewed to polar residues. Position 443 is a phosphoserine (Ser-443). Basic and acidic residues predominate over residues 445–454 (DHNKEPKEKG). Ser-455 carries the post-translational modification Phosphoserine.

It belongs to the IPP transferase family.

Its subcellular location is the mitochondrion. The protein resides in the cytoplasm. It catalyses the reaction adenosine(37) in tRNA + dimethylallyl diphosphate = N(6)-dimethylallyladenosine(37) in tRNA + diphosphate. In terms of biological role, catalyzes the transfer of a dimethylallyl group onto the adenine at position 37 of both cytosolic and mitochondrial tRNAs, leading to the formation of N6-(dimethylallyl)adenosine (i6A37). Mediates modification of a limited subset of tRNAs: tRNA(Ser)(AGA), tRNA(Ser)(CGA), tRNA(Ser)(UGA), as well as partial modification of the selenocysteine tRNA(Ser)(UCA). TRIT1 is therefore required for selenoprotein expression. The polypeptide is tRNA dimethylallyltransferase (TRIT1) (Homo sapiens (Human)).